Here is an 89-residue protein sequence, read N- to C-terminus: Small ribosomal subunit protein uS15 (89 aa).

This sequence belongs to the universal ribosomal protein uS15 family. As to quaternary structure, part of the 30S ribosomal subunit. Forms a bridge to the 50S subunit in the 70S ribosome, contacting the 23S rRNA.

In terms of biological role, one of the primary rRNA binding proteins, it binds directly to 16S rRNA where it helps nucleate assembly of the platform of the 30S subunit by binding and bridging several RNA helices of the 16S rRNA. Functionally, forms an intersubunit bridge (bridge B4) with the 23S rRNA of the 50S subunit in the ribosome. The protein is Small ribosomal subunit protein uS15 of Vibrio vulnificus (strain YJ016).